The primary structure comprises 162 residues: MMSETGFIDVKIFPQRLLKPETAEKLLNRIYELEGIVRVLVHGPSIPDRVYYGPARGTEVNHSDRRKITVRGEEFELRVKVGEIIVGMLPETLEEKMETIEEILDEVLPCSYKVFIGAFTKKDITISDYLKYGLKFEEKIDPRVIGMVDPSSRMKDTVVNIK.

MCR is composed of three subunits: alpha, beta, and gamma. The function of protein D is not known.

The polypeptide is Methyl-coenzyme M reductase II operon protein D (mrtD) (Methanothermobacter thermautotrophicus (strain ATCC 29096 / DSM 1053 / JCM 10044 / NBRC 100330 / Delta H) (Methanobacterium thermoautotrophicum)).